Reading from the N-terminus, the 195-residue chain is Recombination protein RecR (195 aa).

A C4-type zinc finger spans residues cysteine 54–cysteine 69. Residues alanine 77–proline 172 form the Toprim domain.

This sequence belongs to the RecR family.

Its function is as follows. May play a role in DNA repair. It seems to be involved in an RecBC-independent recombinational process of DNA repair. It may act with RecF and RecO. This is Recombination protein RecR from Treponema denticola (strain ATCC 35405 / DSM 14222 / CIP 103919 / JCM 8153 / KCTC 15104).